The primary structure comprises 407 residues: Serine hydroxymethyltransferase (407 aa).

Residues Leu-120 and 124–126 (GHL) each bind (6S)-5,6,7,8-tetrahydrofolate. Lys-229 carries the post-translational modification N6-(pyridoxal phosphate)lysine.

This sequence belongs to the SHMT family. As to quaternary structure, homodimer. Pyridoxal 5'-phosphate is required as a cofactor.

It is found in the cytoplasm. The catalysed reaction is (6R)-5,10-methylene-5,6,7,8-tetrahydrofolate + glycine + H2O = (6S)-5,6,7,8-tetrahydrofolate + L-serine. The protein operates within one-carbon metabolism; tetrahydrofolate interconversion. It functions in the pathway amino-acid biosynthesis; glycine biosynthesis; glycine from L-serine: step 1/1. Catalyzes the reversible interconversion of serine and glycine with tetrahydrofolate (THF) serving as the one-carbon carrier. This reaction serves as the major source of one-carbon groups required for the biosynthesis of purines, thymidylate, methionine, and other important biomolecules. Also exhibits THF-independent aldolase activity toward beta-hydroxyamino acids, producing glycine and aldehydes, via a retro-aldol mechanism. This chain is Serine hydroxymethyltransferase, found in Deinococcus deserti (strain DSM 17065 / CIP 109153 / LMG 22923 / VCD115).